A 180-amino-acid polypeptide reads, in one-letter code: Translation initiation factor IF-3 (180 aa).

The protein belongs to the IF-3 family. Monomer.

The protein localises to the cytoplasm. Its function is as follows. IF-3 binds to the 30S ribosomal subunit and shifts the equilibrium between 70S ribosomes and their 50S and 30S subunits in favor of the free subunits, thus enhancing the availability of 30S subunits on which protein synthesis initiation begins. The protein is Translation initiation factor IF-3 of Klebsiella pneumoniae.